A 581-amino-acid polypeptide reads, in one-letter code: Dehydrocurvularin exporter (581 aa).

The span at 1–10 (MTDSPSLESN) shows a compositional bias: polar residues. The tract at residues 1–47 (MTDSPSLESNNKSDMDTPRPPASSHDEHDAAESVSEKQDSATTSPTG) is disordered. Asn-11 carries an N-linked (GlcNAc...) asparagine glycan. Over residues 24–39 (SHDEHDAAESVSEKQD) the composition is skewed to basic and acidic residues. Helical transmembrane passes span 61–81 (LVMFTIFVSTILVSLEIGIIA), 96–116 (DVGWYGSATFILAAAASPLWG), 126–146 (WVYLSAVGIFLVGSIVAAAAP), 159–179 (GWGASGVLGGTLIVINYVAPP), 184–204 (LLIGTWMAVFMMSTILGPVIG), 215–235 (WCFWINLPVGGPIVVLLLLFL), 251–271 (IILNLDIPGFCLLLVSLVCLT), 288–308 (VIATLVLWILLTIGFFIVEWL), 330–350 (IFCLVSYAALYQVMFYLPIYF), 363–383 (VNTLPFLAFFALGAMVSGGAI), 392–412 (YELAGALIMTAGMALIYILDV), 424–444 (VLFGFGIGLCNQVPMTAVQGF), 456–476 (IMVMCQTLSGAYFVAIAQSLF), and 527–547 (VFAFSLACAAFSVILTALIPF). The interval 552–581 (DHEKKPSKDAMASDEVKASEEVQQEKKVTV) is disordered. Over residues 565–581 (DEVKASEEVQQEKKVTV) the composition is skewed to basic and acidic residues.

The protein belongs to the major facilitator superfamily. TCR/Tet family.

Its subcellular location is the cell membrane. Functionally, efflux pump that is probably involved in the export of dehydrocurvularin. This chain is Dehydrocurvularin exporter, found in Alternaria cinerariae.